The chain runs to 65 residues: Large ribosomal subunit protein bL33m (65 aa).

A mitochondrion-targeting transit peptide spans 1–8 (MFLTTANL).

Belongs to the bacterial ribosomal protein bL33 family. As to quaternary structure, component of the mitochondrial ribosome large subunit (39S) which comprises a 16S rRNA and about 50 distinct proteins.

It localises to the mitochondrion. The protein is Large ribosomal subunit protein bL33m (mrpl33) of Tetraodon nigroviridis (Spotted green pufferfish).